Reading from the N-terminus, the 139-residue chain is D-ribose pyranase (139 aa).

Histidine 20 (proton donor) is an active-site residue. Residues aspartate 28, histidine 106, and 128–130 contribute to the substrate site; that span reads YAN.

The protein belongs to the RbsD / FucU family. RbsD subfamily. Homodecamer.

The protein localises to the cytoplasm. The catalysed reaction is beta-D-ribopyranose = beta-D-ribofuranose. It participates in carbohydrate metabolism; D-ribose degradation; D-ribose 5-phosphate from beta-D-ribopyranose: step 1/2. Functionally, catalyzes the interconversion of beta-pyran and beta-furan forms of D-ribose. This Salmonella agona (strain SL483) protein is D-ribose pyranase.